We begin with the raw amino-acid sequence, 661 residues long: MNHFSLISEYKPAGDQPKAIDEIIAGLNSKKRSQMLLGITGSGKTFTMANIIERTNRPTLIMAHNKTLAAQIYSEMKSIFPKNAVEYFVSYYDYYQPEAYIARTDTFIEKDSSINEHIDLMRHSATRSLLERRDVIVVASVSCIYGLGSPDLYYQMTVNLEPGKSYPRDKLLNDLINLQYKRNDMGFERGCFRVKGDNIDIFPSHYSDKAWRLSFFSNELEYIHEFDPLTGEKLAKLDKAIVFGHSHFVMPQDTVNNAISGIEEELQKRLEFLKSQNKLLETQRLNQRTQYDLEMLTETGSCKGVENYSRFFTGRNAGEPPPTLFEYLPKDALLFVDESHVSVPQIKAMYNSDRARKEVLVEHGFRLPSALDNRPLKFEEWEKFRPQTVFVSATPGPFELEETGGTVVELIIRPTGLLDPECIIKPATKQVEDLISEIQATVAKGLRVLVTTLTKKMAEDLTAYLQELKYKTSYLHSNVHTLERIEILQDLRQGTIDILVGINLLREGLDIPECGLVAILDADKEGFLRSEVSLIQTIGRAARNSEGRVILYADKMTKSIDKALSETLRRRQIQQEYNEKHGIIPKTINRAIHALATLERVDSKCDTKQAHTLFDNTAKLKANINKLNKEMLKAASNLEFEQAAKLRDQLKTLEAAARELS.

A Helicase ATP-binding domain is found at 25 to 182 (AGLNSKKRSQ…NDLINLQYKR (158 aa)). 38–45 (GITGSGKT) contributes to the ATP binding site. Positions 91-114 (YYDYYQPEAYIARTDTFIEKDSSI) match the Beta-hairpin motif. Positions 430–592 (QVEDLISEIQ…IIPKTINRAI (163 aa)) constitute a Helicase C-terminal domain. The region spanning 621–656 (KANINKLNKEMLKAASNLEFEQAAKLRDQLKTLEAA) is the UVR domain.

Belongs to the UvrB family. In terms of assembly, forms a heterotetramer with UvrA during the search for lesions. Interacts with UvrC in an incision complex.

Its subcellular location is the cytoplasm. The UvrABC repair system catalyzes the recognition and processing of DNA lesions. A damage recognition complex composed of 2 UvrA and 2 UvrB subunits scans DNA for abnormalities. Upon binding of the UvrA(2)B(2) complex to a putative damaged site, the DNA wraps around one UvrB monomer. DNA wrap is dependent on ATP binding by UvrB and probably causes local melting of the DNA helix, facilitating insertion of UvrB beta-hairpin between the DNA strands. Then UvrB probes one DNA strand for the presence of a lesion. If a lesion is found the UvrA subunits dissociate and the UvrB-DNA preincision complex is formed. This complex is subsequently bound by UvrC and the second UvrB is released. If no lesion is found, the DNA wraps around the other UvrB subunit that will check the other stand for damage. The polypeptide is UvrABC system protein B (Rickettsia akari (strain Hartford)).